We begin with the raw amino-acid sequence, 264 residues long: 3-methyl-2-oxobutanoate hydroxymethyltransferase (264 aa).

Residues Asp-45 and Asp-84 each contribute to the Mg(2+) site. 3-methyl-2-oxobutanoate-binding positions include 45 to 46, Asp-84, and Lys-112; that span reads DS. Glu-114 serves as a coordination point for Mg(2+). Residue Glu-181 is the Proton acceptor of the active site.

This sequence belongs to the PanB family. In terms of assembly, homodecamer; pentamer of dimers. Mg(2+) is required as a cofactor.

The protein localises to the cytoplasm. It carries out the reaction 3-methyl-2-oxobutanoate + (6R)-5,10-methylene-5,6,7,8-tetrahydrofolate + H2O = 2-dehydropantoate + (6S)-5,6,7,8-tetrahydrofolate. Its pathway is cofactor biosynthesis; (R)-pantothenate biosynthesis; (R)-pantoate from 3-methyl-2-oxobutanoate: step 1/2. Its function is as follows. Catalyzes the reversible reaction in which hydroxymethyl group from 5,10-methylenetetrahydrofolate is transferred onto alpha-ketoisovalerate to form ketopantoate. The polypeptide is 3-methyl-2-oxobutanoate hydroxymethyltransferase (Aeromonas salmonicida (strain A449)).